The following is a 148-amino-acid chain: Cdc42 effector protein 5 (148 aa).

2 disordered regions span residues 1-89 and 111-148; these read MPVL…DPLL and RPEA…VIGL. One can recognise a CRIB domain in the interval 23–37; the sequence is ISAPLGDFRHTLHVG. At Arg-38 the chain carries Omega-N-methylarginine. The span at 55 to 76 shows a compositional bias: pro residues; that stretch reads GPPPEPRAPPAGAPRSPPPPAV. Positions 77–87 are enriched in low complexity; the sequence is PQSAAPSPADP.

The protein belongs to the BORG/CEP family. In terms of assembly, interacts with CDC42, in a GTP-dependent manner, and with SEPT7.

The protein resides in the endomembrane system. It localises to the cytoplasm. Its subcellular location is the cytoskeleton. Its function is as follows. Probably involved in the organization of the actin cytoskeleton. May act downstream of CDC42 to induce actin filament assembly leading to cell shape changes. Induces pseudopodia formation in fibroblasts. Inhibits MAPK8 independently of CDC42 binding. Controls septin organization and this effect is negatively regulated by CDC42. In Homo sapiens (Human), this protein is Cdc42 effector protein 5 (CDC42EP5).